Reading from the N-terminus, the 429-residue chain is Ribosomal RNA small subunit methyltransferase B (429 aa).

Residues 254 to 260 (CAAPGGK), aspartate 277, aspartate 303, and aspartate 322 contribute to the S-adenosyl-L-methionine site. Cysteine 375 acts as the Nucleophile in catalysis.

The protein belongs to the class I-like SAM-binding methyltransferase superfamily. RsmB/NOP family.

It is found in the cytoplasm. The catalysed reaction is cytidine(967) in 16S rRNA + S-adenosyl-L-methionine = 5-methylcytidine(967) in 16S rRNA + S-adenosyl-L-homocysteine + H(+). In terms of biological role, specifically methylates the cytosine at position 967 (m5C967) of 16S rRNA. This is Ribosomal RNA small subunit methyltransferase B from Escherichia coli O6:H1 (strain CFT073 / ATCC 700928 / UPEC).